The following is an 89-amino-acid chain: MSITAERKQELIKKFAIKEGDTGSPEVQVAILTERINNLTDHFKTNKKDNHSRRGLLTMVATRRKLLDYARSKSEARYTKLITELGIRR.

It belongs to the universal ribosomal protein uS15 family. In terms of assembly, part of the 30S ribosomal subunit. Forms a bridge to the 50S subunit in the 70S ribosome, contacting the 23S rRNA.

Functionally, one of the primary rRNA binding proteins, it binds directly to 16S rRNA where it helps nucleate assembly of the platform of the 30S subunit by binding and bridging several RNA helices of the 16S rRNA. In terms of biological role, forms an intersubunit bridge (bridge B4) with the 23S rRNA of the 50S subunit in the ribosome. The chain is Small ribosomal subunit protein uS15 from Hyphomonas neptunium (strain ATCC 15444).